A 205-amino-acid polypeptide reads, in one-letter code: COP9 signalosome complex subunit 7 (205 aa).

One can recognise a PCI domain in the interval 1–135; the sequence is MEEKISQAID…QTLHVSWALE (135 aa). S183 is modified (phosphoserine).

The protein belongs to the CSN7/EIF3M family. CSN7 subfamily. Component of the COP9 signalosome (CSN) complex.

Its function is as follows. Component of the COP9 signalosome (CSN) complex that acts as an regulator of the ubiquitin (Ubl) conjugation pathway by mediating the deneddylation of the cullin subunit of SCF-type E3 ubiquitin-protein ligase complexes. The polypeptide is COP9 signalosome complex subunit 7 (csn71) (Schizosaccharomyces pombe (strain 972 / ATCC 24843) (Fission yeast)).